A 187-amino-acid polypeptide reads, in one-letter code: uncharacterized protein (187 aa).

The interval 1–95 is disordered; sequence MTTMKRSADP…GSTRPSARYG (95 aa). Residues 46–80 are compositionally biased toward basic residues; it reads RARRSRGPKRFLGKRNYRRARARKPGKRDRAHSSK.

The protein localises to the mitochondrion. This is an uncharacterized protein from Arabidopsis thaliana (Mouse-ear cress).